Reading from the N-terminus, the 382-residue chain is Succinate--CoA ligase [ADP-forming] subunit beta (382 aa).

Positions 9–237 constitute an ATP-grasp domain; that stretch reads RDLLARYGIP…PSAEPEAERR (229 aa). Residues Lys45, 52–54, Ile94, and Glu99 contribute to the ATP site; that span reads GRG. Asn192 and Asp206 together coordinate Mg(2+). Residues Asn257 and 314-316 each bind substrate; that span reads GIT.

This sequence belongs to the succinate/malate CoA ligase beta subunit family. Heterotetramer of two alpha and two beta subunits. The cofactor is Mg(2+).

The enzyme catalyses succinate + ATP + CoA = succinyl-CoA + ADP + phosphate. The catalysed reaction is GTP + succinate + CoA = succinyl-CoA + GDP + phosphate. It participates in carbohydrate metabolism; tricarboxylic acid cycle; succinate from succinyl-CoA (ligase route): step 1/1. Functionally, succinyl-CoA synthetase functions in the citric acid cycle (TCA), coupling the hydrolysis of succinyl-CoA to the synthesis of either ATP or GTP and thus represents the only step of substrate-level phosphorylation in the TCA. The beta subunit provides nucleotide specificity of the enzyme and binds the substrate succinate, while the binding sites for coenzyme A and phosphate are found in the alpha subunit. This is Succinate--CoA ligase [ADP-forming] subunit beta from Chloroflexus aggregans (strain MD-66 / DSM 9485).